We begin with the raw amino-acid sequence, 187 residues long: Threonylcarbamoyl-AMP synthase (187 aa).

The YrdC-like domain occupies Asn4–Asn187. The disordered stretch occupies residues Gly168–Asn187.

Belongs to the SUA5 family. TsaC subfamily.

The protein localises to the cytoplasm. The catalysed reaction is L-threonine + hydrogencarbonate + ATP = L-threonylcarbamoyladenylate + diphosphate + H2O. Its function is as follows. Required for the formation of a threonylcarbamoyl group on adenosine at position 37 (t(6)A37) in tRNAs that read codons beginning with adenine. Catalyzes the conversion of L-threonine, HCO(3)(-)/CO(2) and ATP to give threonylcarbamoyl-AMP (TC-AMP) as the acyladenylate intermediate, with the release of diphosphate. The polypeptide is Threonylcarbamoyl-AMP synthase (Pseudoalteromonas atlantica (strain T6c / ATCC BAA-1087)).